A 455-amino-acid polypeptide reads, in one-letter code: Ribulose bisphosphate carboxylase large chain (455 aa).

The residue at position 5 (Lys5) is an N6,N6,N6-trimethyllysine. Positions 114 and 164 each coordinate substrate. Lys166 acts as the Proton acceptor in catalysis. Position 168 (Lys168) interacts with substrate. Lys192, Asp194, and Glu195 together coordinate Mg(2+). An N6-carboxylysine modification is found at Lys192. The active-site Proton acceptor is the His285. Substrate-binding residues include Arg286, His318, and Ser370.

This sequence belongs to the RuBisCO large chain family. Type I subfamily. As to quaternary structure, heterohexadecamer of 8 large chains and 8 small chains; disulfide-linked. The disulfide link is formed within the large subunit homodimers. The cofactor is Mg(2+). Post-translationally, the disulfide bond which can form in the large chain dimeric partners within the hexadecamer appears to be associated with oxidative stress and protein turnover.

It localises to the plastid. The protein localises to the chloroplast. It catalyses the reaction 2 (2R)-3-phosphoglycerate + 2 H(+) = D-ribulose 1,5-bisphosphate + CO2 + H2O. The catalysed reaction is D-ribulose 1,5-bisphosphate + O2 = 2-phosphoglycolate + (2R)-3-phosphoglycerate + 2 H(+). Its function is as follows. RuBisCO catalyzes two reactions: the carboxylation of D-ribulose 1,5-bisphosphate, the primary event in carbon dioxide fixation, as well as the oxidative fragmentation of the pentose substrate in the photorespiration process. Both reactions occur simultaneously and in competition at the same active site. In Lupinus arcticus (Arctic lupine), this protein is Ribulose bisphosphate carboxylase large chain.